The sequence spans 494 residues: UPF0371 protein SpyM3_1021 (494 aa).

The protein belongs to the UPF0371 family.

The chain is UPF0371 protein SpyM3_1021 from Streptococcus pyogenes serotype M3 (strain ATCC BAA-595 / MGAS315).